The following is a 258-amino-acid chain: Thiazole synthase (258 aa).

The active-site Schiff-base intermediate with DXP is Lys-96. 1-deoxy-D-xylulose 5-phosphate-binding positions include Gly-157, 183 to 184 (AG), and 205 to 206 (NT).

The protein belongs to the ThiG family. As to quaternary structure, homotetramer. Forms heterodimers with either ThiH or ThiS.

The protein resides in the cytoplasm. It carries out the reaction [ThiS sulfur-carrier protein]-C-terminal-Gly-aminoethanethioate + 2-iminoacetate + 1-deoxy-D-xylulose 5-phosphate = [ThiS sulfur-carrier protein]-C-terminal Gly-Gly + 2-[(2R,5Z)-2-carboxy-4-methylthiazol-5(2H)-ylidene]ethyl phosphate + 2 H2O + H(+). Its pathway is cofactor biosynthesis; thiamine diphosphate biosynthesis. Catalyzes the rearrangement of 1-deoxy-D-xylulose 5-phosphate (DXP) to produce the thiazole phosphate moiety of thiamine. Sulfur is provided by the thiocarboxylate moiety of the carrier protein ThiS. In vitro, sulfur can be provided by H(2)S. The protein is Thiazole synthase of Alkaliphilus metalliredigens (strain QYMF).